Here is a 252-residue protein sequence, read N- to C-terminus: Triosephosphate isomerase (252 aa).

10–12 (NWK) lines the substrate pocket. Histidine 96 (electrophile) is an active-site residue. Glutamate 168 serves as the catalytic Proton acceptor. Substrate-binding positions include glycine 174, serine 214, and 235 to 236 (GG).

The protein belongs to the triosephosphate isomerase family. Homodimer.

The protein localises to the cytoplasm. It carries out the reaction D-glyceraldehyde 3-phosphate = dihydroxyacetone phosphate. It participates in carbohydrate biosynthesis; gluconeogenesis. The protein operates within carbohydrate degradation; glycolysis; D-glyceraldehyde 3-phosphate from glycerone phosphate: step 1/1. Involved in the gluconeogenesis. Catalyzes stereospecifically the conversion of dihydroxyacetone phosphate (DHAP) to D-glyceraldehyde-3-phosphate (G3P). This Lactobacillus delbrueckii subsp. bulgaricus (strain ATCC 11842 / DSM 20081 / BCRC 10696 / JCM 1002 / NBRC 13953 / NCIMB 11778 / NCTC 12712 / WDCM 00102 / Lb 14) protein is Triosephosphate isomerase.